A 1404-amino-acid chain; its full sequence is DNA-directed RNA polymerase subunit beta' (1404 aa).

Zn(2+)-binding residues include Cys-70, Cys-72, Cys-85, and Cys-88. Mg(2+)-binding residues include Asp-458, Asp-460, and Asp-462. Residues Cys-813, Cys-887, Cys-894, and Cys-897 each coordinate Zn(2+). The tract at residues 1377-1404 (ERRAIAESEAAELEASQAETSDENAAAE) is disordered.

It belongs to the RNA polymerase beta' chain family. In terms of assembly, the RNAP catalytic core consists of 2 alpha, 1 beta, 1 beta' and 1 omega subunit. When a sigma factor is associated with the core the holoenzyme is formed, which can initiate transcription. Mg(2+) is required as a cofactor. It depends on Zn(2+) as a cofactor.

It carries out the reaction RNA(n) + a ribonucleoside 5'-triphosphate = RNA(n+1) + diphosphate. DNA-dependent RNA polymerase catalyzes the transcription of DNA into RNA using the four ribonucleoside triphosphates as substrates. This is DNA-directed RNA polymerase subunit beta' from Polaromonas naphthalenivorans (strain CJ2).